Reading from the N-terminus, the 963-residue chain is Spliceosome associated factor 3, U4/U6 recycling protein (963 aa).

Residues 1-11 (MATAAETSASE) show a composition bias toward low complexity. 2 disordered regions span residues 1–36 (MATA…RTRR) and 50–90 (TMGP…YDEE). Ala2 is modified (N-acetylalanine). Residues 2-351 (ATAAETSASE…LVPDLWIRYS (350 aa)) form a mediates interaction with PRPF3 region. Ser10 and Ser16 each carry phosphoserine. Positions 14-23 (AESKAGPKAD) are enriched in basic and acidic residues. Residues 21–46 (KADGEEDEVKAARTRRKVLSRAVAAA) adopt a coiled-coil conformation. Over residues 57–69 (QQEEGVSESDGDE) the composition is skewed to acidic residues. Residues 82–110 (EYEWEYDEEEEKNQLEIERLEEQLSINVY) are a coiled coil. HAT repeat units follow at residues 126-158 (GELT…DEIS), 164-195 (LDRE…YSVG), 201-237 (GGLE…FESA), 242-275 (ARLE…WSED), 324-356 (GDPA…YLDR), 359-391 (KVKD…AMER), 394-430 (VDHQ…YLRR), and 487-520 (NNMQ…LERA). Ser215 bears the Phosphoserine mark. Residues 487-520 (NNMQKARELWDSIMTRGNAKYANMWLEYYNLERA) form a required for interaction with USP4 region. A necessary and sufficient for U6 snRNA binding region spans residues 537 to 953 (CTSDYPEHVC…AATEAPKMSN (417 aa)). Residues 559–619 (LEDWDIAVQK…ALKKKKKIRG (61 aa)) are a coiled coil. Residues 590-601 (LVQQEEEKAEQR) show a composition bias toward basic and acidic residues. A disordered region spans residues 590–694 (LVQQEEEKAE…AASLKRDMPK (105 aa)). Positions 600–670 (QRKRARAEKK…EVAAGPAGKC (71 aa)) are required for nuclear localization. The Nuclear localization signal motif lies at 601 to 608 (RKRARAEK). Positions 602-617 (KRARAEKKALKKKKKI) are enriched in basic residues. Acidic residues predominate over residues 626–639 (DEDDEKEWGDDEEE). Position 650 is a phosphoserine (Ser650). Phosphothreonine is present on Thr657. Positions 677-694 (PPSKQKEKAASLKRDMPK) are enriched in basic and acidic residues. The region spanning 704 to 782 (ITVFVSNLPY…RPMFVSPCVD (79 aa)) is the RRM 1 domain. Residues Ser769, Ser795, and Ser852 each carry the phosphoserine modification. The 78-residue stretch at 801 to 878 (HKLFISGLPF…NIIKVAISNP (78 aa)) folds into the RRM 2 domain. Residues 878–898 (PPQRKVPEKPETRKAPGGPML) form a disordered region. Residues 882–891 (KVPEKPETRK) show a composition bias toward basic and acidic residues. Arg906 is modified (omega-N-methylarginine). The interval 920–948 (LQRPSAAAPQAENGPAAAPAVAAPAATEA) is disordered. Residues 925–948 (AAAPQAENGPAAAPAVAAPAATEA) show a composition bias toward low complexity.

Component of the 7SK snRNP complex at least composed of P-TEFb (composed of CDK9 and CCNT1/cyclin-T1), HEXIM1, HEXIM2, BCDIN3, SART3 proteins and 7SK and U6 snRNAs. Interacts with AGO1 and AGO2. Interacts with PRPF3 and USP4; the interaction with PRPF3 is direct and recruits USP4 to its substrate PRPF3. Interacts with USP15; the interaction is direct. Interacts with HIV-1 Tat. As to expression, ubiquitously expressed.

It is found in the nucleus. The protein localises to the nucleoplasm. It localises to the cajal body. The protein resides in the nucleus speckle. Its subcellular location is the cytoplasm. Functionally, U6 snRNP-binding protein that functions as a recycling factor of the splicing machinery. Promotes the initial reassembly of U4 and U6 snRNPs following their ejection from the spliceosome during its maturation. Also binds U6atac snRNPs and may function as a recycling factor for U4atac/U6atac spliceosomal snRNP, an initial step in the assembly of U12-type spliceosomal complex. The U12-type spliceosomal complex plays a role in the splicing of introns with non-canonical splice sites. May also function as a substrate-targeting factor for deubiquitinases like USP4 and USP15. Recruits USP4 to ubiquitinated PRPF3 within the U4/U5/U6 tri-snRNP complex, promoting PRPF3 deubiquitination and thereby regulating the spliceosome U4/U5/U6 tri-snRNP spliceosomal complex disassembly. May also recruit the deubiquitinase USP15 to histone H2B and mediate histone deubiquitination, thereby regulating gene expression and/or DNA repair. May play a role in hematopoiesis probably through transcription regulation of specific genes including MYC. Its function is as follows. Regulates Tat transactivation activity through direct interaction. May be a cellular factor for HIV-1 gene expression and viral replication. This chain is Spliceosome associated factor 3, U4/U6 recycling protein, found in Homo sapiens (Human).